A 132-amino-acid chain; its full sequence is L-ectoine synthase (132 aa).

The protein belongs to the ectoine synthase family.

It carries out the reaction (2S)-4-acetamido-2-aminobutanoate = L-ectoine + H2O. Its pathway is amine and polyamine biosynthesis; ectoine biosynthesis; L-ectoine from L-aspartate 4-semialdehyde: step 3/3. Functionally, catalyzes the circularization of gamma-N-acetyl-alpha,gamma-diaminobutyric acid (ADABA) to ectoine (1,4,5,6-tetrahydro-2-methyl-4-pyrimidine carboxylic acid), which is an excellent osmoprotectant. In Rhodococcus opacus (strain B4), this protein is L-ectoine synthase.